A 66-amino-acid polypeptide reads, in one-letter code: Large ribosomal subunit protein bL33c (66 aa).

It belongs to the bacterial ribosomal protein bL33 family.

The protein resides in the plastid. It is found in the chloroplast. The protein is Large ribosomal subunit protein bL33c of Glycine max (Soybean).